The following is a 507-amino-acid chain: TOM1-like protein 2 (507 aa).

In terms of domain architecture, VHS spans 20–152 (ATDGSLQSED…ELKRKGVEFP (133 aa)). At Ser-160 the chain carries Phosphoserine. The interval 162–210 (IHTPQRSVPEVDPAATMPRSQSQQRTSAGSYSSPPPAPYSAPQAPALSV) is disordered. Thr-164 is subject to Phosphothreonine. The GAT domain maps to 219–307 (EQIARLRSEL…VFLRYERFER (89 aa)). A Clathrin-binding motif is present at residues 329-334 (NLIDLG). The disordered stretch occupies residues 467-507 (RAKAAEMVPDLPSPPMEAPAPASNPSGRKKPERSEDALFAL). Residues 498–507 (ERSEDALFAL) show a composition bias toward basic and acidic residues.

Belongs to the TOM1 family. As to quaternary structure, interacts with clathrin, SRC and TOLLIP. Interacts with MYO6. As to expression, ubiquitously expressed with higher expression in heart and skeletal muscle.

In terms of biological role, acts as a MYO6/Myosin VI adapter protein that targets myosin VI to endocytic structures. May also play a role in recruiting clathrin to endosomes. May regulate growth factor-induced mitogenic signaling. The protein is TOM1-like protein 2 (TOM1L2) of Homo sapiens (Human).